The primary structure comprises 155 residues: Small ribosomal subunit protein uS7cz/uS7cy (155 aa).

It belongs to the universal ribosomal protein uS7 family. Part of the 30S ribosomal subunit.

The protein resides in the plastid. Its subcellular location is the chloroplast. In terms of biological role, one of the primary rRNA binding proteins, it binds directly to 16S rRNA where it nucleates assembly of the head domain of the 30S subunit. This chain is Small ribosomal subunit protein uS7cz/uS7cy (rps7-A), found in Phaseolus vulgaris (Kidney bean).